Here is a 1447-residue protein sequence, read N- to C-terminus: Adhesion G protein-coupled receptor L3 (1447 aa).

The signal sequence occupies residues 1–19 (MWPSQLLIFMMLLAPIIHA). The Extracellular segment spans residues 20 to 862 (FSRAPIPMAV…VKHSDAVHDL (843 aa)). Residues 35–124 (SCESYPIELR…KYLEVQYECV (90 aa)) form the SUEL-type lectin domain. 5 cysteine pairs are disulfide-bonded: cysteine 36–cysteine 66, cysteine 45–cysteine 123, cysteine 78–cysteine 110, cysteine 91–cysteine 97, and cysteine 135–cysteine 317. N-linked (GlcNAc...) asparagine glycosylation occurs at asparagine 93. The Olfactomedin-like domain occupies 134–393 (LCPGLLKGVY…VVKYSLDFGP (260 aa)). Positions 249–279 (YHDTSPYRWGGKSDIDLAVDENGLWVIYATE) are interaction with FLRT3. The Ca(2+) site is built by aspartate 264, asparagine 312, alanine 313, and valine 367. The segment at 426-473 (DISTTGPLGMGSTTTSTTLRTTTLSPGRSTTPSVSGRRNRSTSTPSPA) is disordered. Positions 428–458 (STTGPLGMGSTTTSTTLRTTTLSPGRSTTPS) are enriched in low complexity. N-linked (GlcNAc...) asparagine glycosylation is found at asparagine 464, asparagine 549, asparagine 746, asparagine 759, asparagine 804, and asparagine 830. Positions 675-854 (DIVRENTDNI…AVLMAHVEVK (180 aa)) constitute a GAIN-B domain. Intrachain disulfides connect cysteine 805-cysteine 836 and cysteine 824-cysteine 838. Residues 805–854 (CSFWSYSKRTMTGYWSTQGCRLLTTNKTHTTCSCNHLTNFAVLMAHVEVK) form a GPS region. Residues 842-855 (TNFAVLMAHVEVKH) are stachel. The chain crosses the membrane as a helical span at residues 863 to 888 (LLDVITWVGILLSLVCLLICIFTFCF). The Cytoplasmic segment spans residues 889–896 (FRGLQSDR). The chain crosses the membrane as a helical span at residues 897–918 (NTIHKNLCISLFVAELLFLIGI). Residues 919 to 926 (NRTDQPIA) lie on the Extracellular side of the membrane. The chain crosses the membrane as a helical span at residues 927–950 (CAVFAALLHFFFLAAFTWMFLEGV). Cysteine 927 and cysteine 999 form a disulfide bridge. The Cytoplasmic portion of the chain corresponds to 951 to 967 (QLYIMLVEVFESEHSRR). A helical transmembrane segment spans residues 968–990 (KYFYLVGYGMPALIVAVSAAVDY). Topologically, residues 991–1005 (RSYGTDKVCWLRLDT) are extracellular. Residues 1006–1027 (YFIWSFIGPATLIIMLNVIFLG) traverse the membrane as a helical segment. Residues 1028 to 1053 (IALYKMFHHTAILKPESGCLDNIKSW) lie on the Cytoplasmic side of the membrane. Residues 1054–1073 (VIGAIALLCLLGLTWAFGLM) traverse the membrane as a helical segment. At 1074–1078 (YINES) the chain is on the extracellular side. A glycan (N-linked (GlcNAc...) asparagine) is linked at asparagine 1076. The chain crosses the membrane as a helical span at residues 1079 to 1104 (TVIMAYLFTIFNSLQGMFIFIFHCVL). The Cytoplasmic portion of the chain corresponds to 1105 to 1447 (QKKVRKEYGK…KGPAHLVTSL (343 aa)). A disordered region spans residues 1123-1147 (GKSTESSIGSGKTSGSRTPGRYSTG). Serine 1164 is subject to Phosphoserine. Residues 1423 to 1447 (IVPPNKDGTPPEGSSKGPAHLVTSL) form a disordered region. The PDZ-binding signature appears at 1442 to 1447 (HLVTSL).

It belongs to the G-protein coupled receptor 2 family. LN-TM7 subfamily. As to quaternary structure, heterodimer of 2 chains generated by proteolytic processing; the large extracellular N-terminal fragment and the membrane-bound C-terminal fragment predominantly remain associated and non-covalently linked. Interacts (via olfactomedin-like domain) with FLRT1 (via extracellular domain). Interacts (via olfactomedin-like domain) with FLRT2 (via extracellular domain). Interacts (via olfactomedin-like domain) with FLRT3 (via extracellular domain); the interaction is direct. Interacts (via extracellular domain) with TENM1. Interacts (via extracellular domain) with TENM2. Interacts (via extracellular domain) with TENM3. Identified in a complex with FLRT3 and UNC5B; does not interact with UNC5B by itself. Identified in a complex with FLRT3 and UNC5D; does not interact with UNC5D by itself. Interacts (via PDZ-binding motif) with SHANK3. Interacts (via PDZ-binding motif) with DLG4. In terms of processing, autoproteolytically processed at the GPS region of the GAIN-B domain; this cleavage modulates receptor activity.

Its subcellular location is the cell membrane. It is found in the postsynaptic cell membrane. The protein resides in the cell projection. It localises to the axon. The protein localises to the cell junction. With respect to regulation, forms a heterodimer of 2 chains generated by proteolytic processing that remain associated through non-covalent interactions mediated by the GAIN-B domain. In the inactivated receptor, the Stachel sequence (also named stalk) is embedded in the GAIN-B domain, where it adopts a beta-strand conformation. On activation, the Stachel moves into the 7 transmembrane region and adopts a twisted hook-shaped configuration that forms contacts within the receptor, leading to coupling of a G-alpha protein, which activates signaling. The cleaved GAIN-B and N-terminal domains can then dissociate from the rest of the receptor. Orphan adhesion G-protein coupled receptor (aGPCR), which mediates synapse specificity. Ligand binding causes a conformation change that triggers signaling via guanine nucleotide-binding proteins (G proteins) and modulates the activity of downstream effectors. ADGRL3 is coupled with different classes of G alpha proteins, such as G(12)/G(13), G(s), G(i) or G(q), depending on the context. Coupling to G(12)/G(13) G proteins, which mediates the activation Rho small GTPases is the most efficient. Following G-protein coupled receptor activation, associates with cell adhesion molecules that are expressed at the surface of adjacent cells to direct synapse specificity. Specifically mediates the establishment of Schaffer-collateral synapses formed by CA3-region axons on CA1-region pyramidal neurons in the hippocampus. Localizes to postsynaptic spines in excitatory synapses in the S.oriens and S.radiatum and interacts with presynaptic cell adhesion molecules FLRT3 and TENM2, promoting synapse formation. Plays a role in the development of glutamatergic synapses in the cortex. Important in determining the connectivity rates between the principal neurons in the cortex. Functionally, orphan adhesion G-protein coupled receptor (aGPCR), which mediates synapse specificity. Ligand binding causes a conformation change that triggers signaling via guanine nucleotide-binding proteins (G proteins) and modulates the activity of downstream effectors, such as adenylate cyclase. Isoform 1 is specifically coupled to G(s) G proteins and mediates activation of adenylate cyclase activity. Following G-protein coupled receptor activation, undergoes liquid-liquid phase transition, associates with (1) cell adhesion molecules that are expressed at the surface of adjacent cells, as well as (2) PDZ-containing proteins, such as SHANK3 and DLG4, in the cytoplasm to direct synapse formation. This is Adhesion G protein-coupled receptor L3 from Homo sapiens (Human).